Consider the following 256-residue polypeptide: Hydroxyethylthiazole kinase (256 aa).

Residue methionine 38 coordinates substrate. 2 residues coordinate ATP: arginine 114 and threonine 159. Glycine 186 is a substrate binding site.

The protein belongs to the Thz kinase family. Requires Mg(2+) as cofactor.

It catalyses the reaction 5-(2-hydroxyethyl)-4-methylthiazole + ATP = 4-methyl-5-(2-phosphooxyethyl)-thiazole + ADP + H(+). Its pathway is cofactor biosynthesis; thiamine diphosphate biosynthesis; 4-methyl-5-(2-phosphoethyl)-thiazole from 5-(2-hydroxyethyl)-4-methylthiazole: step 1/1. Catalyzes the phosphorylation of the hydroxyl group of 4-methyl-5-beta-hydroxyethylthiazole (THZ). The polypeptide is Hydroxyethylthiazole kinase (Streptococcus agalactiae serotype Ia (strain ATCC 27591 / A909 / CDC SS700)).